The primary structure comprises 399 residues: Elongation factor Tu (399 aa).

The tr-type G domain maps to 10 to 204 (KDHVNIGTIG…AVDDYIDTPE (195 aa)). The tract at residues 19–26 (GHVDHGKT) is G1. 19–26 (GHVDHGKT) contributes to the GTP binding site. Position 26 (Thr-26) interacts with Mg(2+). The segment at 60 to 64 (GITIN) is G2. The interval 81–84 (DCPG) is G3. GTP contacts are provided by residues 81 to 85 (DCPGH) and 136 to 139 (NKKD). The interval 136–139 (NKKD) is G4. A G5 region spans residues 174–176 (SAL).

Belongs to the TRAFAC class translation factor GTPase superfamily. Classic translation factor GTPase family. EF-Tu/EF-1A subfamily. As to quaternary structure, monomer.

It localises to the cytoplasm. It carries out the reaction GTP + H2O = GDP + phosphate + H(+). Functionally, GTP hydrolase that promotes the GTP-dependent binding of aminoacyl-tRNA to the A-site of ribosomes during protein biosynthesis. This Synechocystis sp. (strain ATCC 27184 / PCC 6803 / Kazusa) protein is Elongation factor Tu.